The primary structure comprises 381 residues: tRNA (guanine(26)-N(2))-dimethyltransferase (381 aa).

Residues 6–378 enclose the Trm1 methyltransferase domain; that stretch reads FEVHEGKAKV…APYEVFVEVM (373 aa). S-adenosyl-L-methionine is bound by residues arginine 38, arginine 63, aspartate 80, aspartate 122, and alanine 123.

It belongs to the class I-like SAM-binding methyltransferase superfamily. Trm1 family. Monomer.

The enzyme catalyses guanosine(26) in tRNA + 2 S-adenosyl-L-methionine = N(2)-dimethylguanosine(26) in tRNA + 2 S-adenosyl-L-homocysteine + 2 H(+). Dimethylates a single guanine residue at position 26 of a number of tRNAs using S-adenosyl-L-methionine as donor of the methyl groups. In Pyrococcus furiosus (strain ATCC 43587 / DSM 3638 / JCM 8422 / Vc1), this protein is tRNA (guanine(26)-N(2))-dimethyltransferase.